The chain runs to 1268 residues: Truncated polyprotein 1aTF (1268 aa).

Residues 8–28 form a C4-type; atypical zinc finger; that stretch reads CMCTPAARVFWNAGQVFCTRC. The Peptidase C31 domain maps to 69–180; it reads ECTPSGCCWL…QPFCPFEEAH (112 aa). Residues 69 to 182 are PCP1-alpha; that stretch reads ECTPSGCCWL…FCPFEEAHSD (114 aa). Catalysis depends on for Nsp1-alpha papain-like cysteine proteinase activity residues Cys76 and His146. A PCP1-beta region spans residues 269 to 384; the sequence is PNVFDGKCWL…IFRFGAHKWY (116 aa). A Peptidase C32 domain is found at 269–385; sequence PNVFDGKCWL…FRFGAHKWYG (117 aa). Residues Cys276 and His345 each act as for Nsp1-beta papain-like cysteine proteinase activity in the active site. The Peptidase C33 domain maps to 420–527; sequence TYSPPTDGSC…VGVCSEGCVA (108 aa). Catalysis depends on for Nsp2 cysteine proteinase activity residues Cys429 and His498. 2 disordered regions span residues 728 to 758 and 1027 to 1064; these read AIGS…SHPA and SVTP…SHAS. Positions 737-749 are enriched in basic and acidic residues; it reads DSKRENMHNSRED. The next 4 membrane-spanning stretches (helical) occupy residues 1119 to 1139, 1153 to 1173, 1194 to 1214, and 1233 to 1253; these read LWLQ…CSVV, FLVL…LLLY, VMLS…AALW, and VISG…FLLF.

It localises to the host nucleus. The protein localises to the host cytoplasm. It is found in the host endoplasmic reticulum membrane. Its subcellular location is the membrane. Functionally, is essential for viral subgenomic mRNA synthesis. Its function is as follows. Inhibits IFN-beta production. Counteracts the action of NF-kappaB by decreasing the phosphorylation of IkappaB-alpha, such that the degradation of IkappaB-alpha is suppressed. This leads to the blockage of NF-kappaB nuclear translocation and thus interference of NF-kappaB activation. Also seems to inhibit IRF3-dependent pathways. In terms of biological role, nsp1-beta transactivates the programmed ribosomal frameshifting event leading to the expression of the 1aTF polyprotein. The protein is Truncated polyprotein 1aTF of Porcine reproductive and respiratory syndrome virus (isolate Pig/United States/SD 01-08/2001) (PRRSV).